We begin with the raw amino-acid sequence, 404 residues long: Cysteine desulfurase IscS (404 aa).

Pyridoxal 5'-phosphate-binding positions include 75–76 (AT), Asn-155, Gln-183, and 203–205 (SAH). Residue Lys-206 is modified to N6-(pyridoxal phosphate)lysine. Residue Thr-243 coordinates pyridoxal 5'-phosphate. Cys-328 functions as the Cysteine persulfide intermediate in the catalytic mechanism. Residue Cys-328 participates in [2Fe-2S] cluster binding.

This sequence belongs to the class-V pyridoxal-phosphate-dependent aminotransferase family. NifS/IscS subfamily. Homodimer. Forms a heterotetramer with IscU, interacts with other sulfur acceptors. Requires pyridoxal 5'-phosphate as cofactor.

It is found in the cytoplasm. It carries out the reaction (sulfur carrier)-H + L-cysteine = (sulfur carrier)-SH + L-alanine. It functions in the pathway cofactor biosynthesis; iron-sulfur cluster biosynthesis. Master enzyme that delivers sulfur to a number of partners involved in Fe-S cluster assembly, tRNA modification or cofactor biosynthesis. Catalyzes the removal of elemental sulfur atoms from cysteine to produce alanine. Functions as a sulfur delivery protein for Fe-S cluster synthesis onto IscU, an Fe-S scaffold assembly protein, as well as other S acceptor proteins. This Pseudomonas aeruginosa (strain LESB58) protein is Cysteine desulfurase IscS.